The primary structure comprises 389 residues: Xylose isomerase (389 aa).

Catalysis depends on residues H54 and D57. Positions 181, 217, 220, 245, 255, 257, and 287 each coordinate Mg(2+).

It belongs to the xylose isomerase family. In terms of assembly, homotetramer. Requires Mg(2+) as cofactor.

It localises to the cytoplasm. The catalysed reaction is alpha-D-xylose = alpha-D-xylulofuranose. In terms of biological role, involved in D-xylose catabolism. The sequence is that of Xylose isomerase (xylA) from Streptomyces violaceusniger.